The primary structure comprises 180 residues: NAD(P)H-quinone oxidoreductase subunit 6, chloroplastic (180 aa).

5 consecutive transmembrane segments (helical) span residues 10 to 30 (LLLAPLTLSLIFGGIGVVLLT), 32 to 52 (IIYSALSLGLVLICISFFYII), 57 to 77 (FVAVAQILIYIGAVNILILFA), 102 to 122 (IVCTSLFCSLITIILNISWFG), and 153 to 173 (FLPFELISIILLVALIGAITI).

Belongs to the complex I subunit 6 family. NDH is composed of at least 16 different subunits, 5 of which are encoded in the nucleus.

The protein localises to the plastid. It localises to the chloroplast thylakoid membrane. The enzyme catalyses a plastoquinone + NADH + (n+1) H(+)(in) = a plastoquinol + NAD(+) + n H(+)(out). It carries out the reaction a plastoquinone + NADPH + (n+1) H(+)(in) = a plastoquinol + NADP(+) + n H(+)(out). In terms of biological role, NDH shuttles electrons from NAD(P)H:plastoquinone, via FMN and iron-sulfur (Fe-S) centers, to quinones in the photosynthetic chain and possibly in a chloroplast respiratory chain. The immediate electron acceptor for the enzyme in this species is believed to be plastoquinone. Couples the redox reaction to proton translocation, and thus conserves the redox energy in a proton gradient. The protein is NAD(P)H-quinone oxidoreductase subunit 6, chloroplastic (ndhG) of Cryptomeria japonica (Japanese cedar).